Reading from the N-terminus, the 243-residue chain is Arginine transport ATP-binding protein ArtP (243 aa).

In terms of domain architecture, ABC transporter spans 3 to 242 (IRVKNLNFFY…KTEQFKHYLS (240 aa)). Position 35–42 (35–42 (GPSGAGKS)) interacts with ATP.

This sequence belongs to the ABC transporter superfamily. The complex is composed of two ATP-binding proteins (ArtP), two transmembrane proteins (ArtM and ArtQ) and a solute-binding protein (ArtI).

Its subcellular location is the cell inner membrane. It carries out the reaction a polar amino acid(out) + ATP + H2O = a polar amino acid(in) + ADP + phosphate + H(+). The catalysed reaction is L-arginine(out) + ATP + H2O = L-arginine(in) + ADP + phosphate + H(+). Part of the ABC transporter complex ArtPIQM involved in arginine transport. Probably responsible for energy coupling to the transport system. This chain is Arginine transport ATP-binding protein ArtP (artP), found in Haemophilus influenzae (strain ATCC 51907 / DSM 11121 / KW20 / Rd).